We begin with the raw amino-acid sequence, 212 residues long: Adenylate kinase (212 aa).

10-15 (GAGKGT) provides a ligand contact to ATP. Positions 30–59 (STGDMFRAAMANQTEMGRLAKSYIDKGELV) are NMP. Residues Thr31, Arg36, 57–59 (ELV), 86–89 (GYPR), and Gln93 each bind AMP. Residues 127-159 (GRIINRKTGETFHKVFNPPVDYKEEDYYQREDD) are LID. ATP is bound by residues Arg128 and 137-138 (TF). Residues Arg156 and Arg167 each coordinate AMP. Gln195 contributes to the ATP binding site.

Belongs to the adenylate kinase family. As to quaternary structure, monomer.

It is found in the cytoplasm. The catalysed reaction is AMP + ATP = 2 ADP. Its pathway is purine metabolism; AMP biosynthesis via salvage pathway; AMP from ADP: step 1/1. Functionally, catalyzes the reversible transfer of the terminal phosphate group between ATP and AMP. Plays an important role in cellular energy homeostasis and in adenine nucleotide metabolism. This Streptococcus pyogenes serotype M12 (strain MGAS2096) protein is Adenylate kinase.